The sequence spans 497 residues: Glutamyl-tRNA(Gln) amidotransferase subunit A (497 aa).

Residues lysine 75 and serine 150 each act as charge relay system in the active site. Serine 174 functions as the Acyl-ester intermediate in the catalytic mechanism.

This sequence belongs to the amidase family. GatA subfamily. Heterotrimer of A, B and C subunits.

The enzyme catalyses L-glutamyl-tRNA(Gln) + L-glutamine + ATP + H2O = L-glutaminyl-tRNA(Gln) + L-glutamate + ADP + phosphate + H(+). Functionally, allows the formation of correctly charged Gln-tRNA(Gln) through the transamidation of misacylated Glu-tRNA(Gln) in organisms which lack glutaminyl-tRNA synthetase. The reaction takes place in the presence of glutamine and ATP through an activated gamma-phospho-Glu-tRNA(Gln). The sequence is that of Glutamyl-tRNA(Gln) amidotransferase subunit A from Paraburkholderia phymatum (strain DSM 17167 / CIP 108236 / LMG 21445 / STM815) (Burkholderia phymatum).